Here is a 246-residue protein sequence, read N- to C-terminus: 23S rRNA (guanosine-2'-O-)-methyltransferase RlmB (246 aa).

The S-adenosyl-L-methionine site is built by G198, I218, and L227.

It belongs to the class IV-like SAM-binding methyltransferase superfamily. RNA methyltransferase TrmH family. RlmB subfamily.

The protein resides in the cytoplasm. The enzyme catalyses guanosine(2251) in 23S rRNA + S-adenosyl-L-methionine = 2'-O-methylguanosine(2251) in 23S rRNA + S-adenosyl-L-homocysteine + H(+). Specifically methylates the ribose of guanosine 2251 in 23S rRNA. The chain is 23S rRNA (guanosine-2'-O-)-methyltransferase RlmB from Shewanella oneidensis (strain ATCC 700550 / JCM 31522 / CIP 106686 / LMG 19005 / NCIMB 14063 / MR-1).